The sequence spans 218 residues: Histidine biosynthesis bifunctional protein HisIE (218 aa).

The segment at Met1–Thr131 is phosphoribosyl-AMP cyclohydrolase. The tract at residues Leu132–Arg218 is phosphoribosyl-ATP pyrophosphohydrolase.

The protein in the N-terminal section; belongs to the PRA-CH family. It in the C-terminal section; belongs to the PRA-PH family.

The protein resides in the cytoplasm. It carries out the reaction 1-(5-phospho-beta-D-ribosyl)-ATP + H2O = 1-(5-phospho-beta-D-ribosyl)-5'-AMP + diphosphate + H(+). The enzyme catalyses 1-(5-phospho-beta-D-ribosyl)-5'-AMP + H2O = 1-(5-phospho-beta-D-ribosyl)-5-[(5-phospho-beta-D-ribosylamino)methylideneamino]imidazole-4-carboxamide. It participates in amino-acid biosynthesis; L-histidine biosynthesis; L-histidine from 5-phospho-alpha-D-ribose 1-diphosphate: step 2/9. The protein operates within amino-acid biosynthesis; L-histidine biosynthesis; L-histidine from 5-phospho-alpha-D-ribose 1-diphosphate: step 3/9. This Gloeobacter violaceus (strain ATCC 29082 / PCC 7421) protein is Histidine biosynthesis bifunctional protein HisIE.